We begin with the raw amino-acid sequence, 196 residues long: Carnitine operon protein CaiE (196 aa).

The segment at 176–196 is disordered; sequence LRQMEENRPRLQGTTDVAPKR.

Belongs to the transferase hexapeptide repeat family.

It participates in amine and polyamine metabolism; carnitine metabolism. Functionally, overproduction of CaiE stimulates the activity of CaiB and CaiD. The protein is Carnitine operon protein CaiE of Escherichia fergusonii (strain ATCC 35469 / DSM 13698 / CCUG 18766 / IAM 14443 / JCM 21226 / LMG 7866 / NBRC 102419 / NCTC 12128 / CDC 0568-73).